Here is a 304-residue protein sequence, read N- to C-terminus: Non-specific ribonucleoside hydrolase RihC (304 aa).

The active site involves His-233.

The protein belongs to the IUNH family. RihC subfamily.

Hydrolyzes both purine and pyrimidine ribonucleosides with a broad-substrate specificity. The protein is Non-specific ribonucleoside hydrolase RihC of Escherichia fergusonii (strain ATCC 35469 / DSM 13698 / CCUG 18766 / IAM 14443 / JCM 21226 / LMG 7866 / NBRC 102419 / NCTC 12128 / CDC 0568-73).